A 379-amino-acid chain; its full sequence is Cytochrome b (379 aa).

The next 4 membrane-spanning stretches (helical) occupy residues 33–53 (FGSLLGACLTIQVITGLFLAM), 77–98 (WTIRYLHANGASMFFMCLFIHV), 113–133 (WNIGIMLLFSVMATAFMGYVL), and 178–198 (FFALHFILPFIISALAMIHLL). 2 residues coordinate heme b: H83 and H97. H182 and H196 together coordinate heme b. Residue H201 participates in a ubiquinone binding. A run of 4 helical transmembrane segments spans residues 226–246 (TKDFLGLLLLILLLMTLTLFY), 288–308 (LGGVVALILSILILAIIPFLQ), 320–340 (LSQFLFWILVADLLTLTWIGG), and 347–367 (FISIGQTASILYFSLMVFIMP).

This sequence belongs to the cytochrome b family. In terms of assembly, the cytochrome bc1 complex contains 11 subunits: 3 respiratory subunits (MT-CYB, CYC1 and UQCRFS1), 2 core proteins (UQCRC1 and UQCRC2) and 6 low-molecular weight proteins (UQCRH/QCR6, UQCRB/QCR7, UQCRQ/QCR8, UQCR10/QCR9, UQCR11/QCR10 and a cleavage product of UQCRFS1). This cytochrome bc1 complex then forms a dimer. Heme b serves as cofactor.

Its subcellular location is the mitochondrion inner membrane. Component of the ubiquinol-cytochrome c reductase complex (complex III or cytochrome b-c1 complex) that is part of the mitochondrial respiratory chain. The b-c1 complex mediates electron transfer from ubiquinol to cytochrome c. Contributes to the generation of a proton gradient across the mitochondrial membrane that is then used for ATP synthesis. The sequence is that of Cytochrome b (MT-CYB) from Lepilemur randrianasoloi (Randrianasoli's sportive lemur).